A 442-amino-acid chain; its full sequence is Cysteine proteinase 4 (442 aa).

An N-terminal signal peptide occupies residues 1–17 (MRVLSFLCLLLVSYASA). A propeptide spans 18–111 (KQQFSELQYR…TEEEKIFSTP (94 aa)) (activation peptide). Cystine bridges form between cysteine 132-cysteine 178 and cysteine 169-cysteine 212. Residue cysteine 135 is part of the active site. N-linked (GlcNAc...) asparagine glycosylation is found at asparagine 228 and asparagine 254. Cysteine 270 and cysteine 428 form a disulfide bridge. Histidine 277 is an active-site residue. Residues 286 to 396 (SGSSSSSGSS…SGSGSGAVEA (111 aa)) are disordered. Low complexity predominate over residues 287-376 (GSSSSSGSSS…SASGQASASG (90 aa)). Residues 377 to 391 (SGSGSGSGSGSGSGS) show a composition bias toward gly residues. Asparagine 406 is an active-site residue.

It belongs to the peptidase C1 family. In terms of processing, glycosylated; contains GlcNAc-alpha-1-P-Ser residues and fucose.

It is found in the lysosome. The sequence is that of Cysteine proteinase 4 (cprD) from Dictyostelium discoideum (Social amoeba).